The following is a 621-amino-acid chain: Protein CASP (621 aa).

Residues 1 to 574 (MEIVSRAWES…ILATPKSRTV (574 aa)) are Cytoplasmic-facing. 2 coiled-coil regions span residues 101 to 445 (LLKG…VQDI) and 473 to 525 (ILTS…FLQS). A helical; Anchor for type IV membrane protein transmembrane segment spans residues 575–595 (FFSYLLILHALIMLVLYKFAF). At 596-621 (DQSVVRDAETECEYKFHQHMLDNHKQ) the chain is on the lumenal side.

Belongs to the CASP family.

It is found in the golgi apparatus membrane. In terms of biological role, may be involved in intra-Golgi retrograde transport. The protein is Protein CASP (ceh-44) of Caenorhabditis elegans.